Reading from the N-terminus, the 177-residue chain is Co-chaperone protein HscB homolog (177 aa).

The region spanning 8 to 80 (DFFALFGLPR…LPRAQYMLEL (73 aa)) is the J domain.

The protein belongs to the HscB family. In terms of assembly, interacts with HscA and stimulates its ATPase activity.

Co-chaperone involved in the maturation of iron-sulfur cluster-containing proteins. Seems to help targeting proteins to be folded toward HscA. This chain is Co-chaperone protein HscB homolog, found in Aromatoleum aromaticum (strain DSM 19018 / LMG 30748 / EbN1) (Azoarcus sp. (strain EbN1)).